The following is a 169-amino-acid chain: MNNKTNWVIIGRFGRPHGIKGFVTVHSFTDPADNILRYNDWHVFLNKQWQPLKLLTIEVRSKAIIAQIEGYPKRELVSALTNLDIGVQESQLAALAPGEYYWYQLIGMSVINSKGDLFGKVVEIMPTGSNDVLVVEGEKRHLIPYLPGQFVINVDESQQVITVDWDMNF.

One can recognise a PRC barrel domain in the interval 97-169; it reads PGEYYWYQLI…VITVDWDMNF (73 aa).

This sequence belongs to the RimM family. Binds ribosomal protein uS19.

It is found in the cytoplasm. Functionally, an accessory protein needed during the final step in the assembly of 30S ribosomal subunit, possibly for assembly of the head region. Essential for efficient processing of 16S rRNA. May be needed both before and after RbfA during the maturation of 16S rRNA. It has affinity for free ribosomal 30S subunits but not for 70S ribosomes. The sequence is that of Ribosome maturation factor RimM from Legionella pneumophila subsp. pneumophila (strain Philadelphia 1 / ATCC 33152 / DSM 7513).